Consider the following 570-residue polypeptide: Urease subunit alpha (570 aa).

The region spanning 131-570 is the Urease domain; it reads GGMDSHIHFI…LPMAQRYFLF (440 aa). Residues His136, His138, and Lys219 each coordinate Ni(2+). At Lys219 the chain carries N6-carboxylysine. A substrate-binding site is contributed by His221. Positions 248 and 274 each coordinate Ni(2+). The active-site Proton donor is the His322. Residue Asp362 coordinates Ni(2+).

The protein belongs to the metallo-dependent hydrolases superfamily. Urease alpha subunit family. As to quaternary structure, heterotrimer of UreA (gamma), UreB (beta) and UreC (alpha) subunits. Three heterotrimers associate to form the active enzyme. Requires Ni cation as cofactor. In terms of processing, carboxylation allows a single lysine to coordinate two nickel ions.

It is found in the cytoplasm. The catalysed reaction is urea + 2 H2O + H(+) = hydrogencarbonate + 2 NH4(+). The protein operates within nitrogen metabolism; urea degradation; CO(2) and NH(3) from urea (urease route): step 1/1. The sequence is that of Urease subunit alpha from Rhizobium meliloti (strain 1021) (Ensifer meliloti).